Consider the following 209-residue polypeptide: ATP-dependent Clp protease proteolytic subunit 1 (209 aa).

S109 (nucleophile) is an active-site residue. Residue H134 is part of the active site.

Belongs to the peptidase S14 family. As to quaternary structure, fourteen ClpP subunits assemble into 2 heptameric rings which stack back to back to give a disk-like structure with a central cavity, resembling the structure of eukaryotic proteasomes.

Its subcellular location is the cytoplasm. It catalyses the reaction Hydrolysis of proteins to small peptides in the presence of ATP and magnesium. alpha-casein is the usual test substrate. In the absence of ATP, only oligopeptides shorter than five residues are hydrolyzed (such as succinyl-Leu-Tyr-|-NHMec, and Leu-Tyr-Leu-|-Tyr-Trp, in which cleavage of the -Tyr-|-Leu- and -Tyr-|-Trp bonds also occurs).. Its function is as follows. Cleaves peptides in various proteins in a process that requires ATP hydrolysis. Has a chymotrypsin-like activity. Plays a major role in the degradation of misfolded proteins. The sequence is that of ATP-dependent Clp protease proteolytic subunit 1 from Corynebacterium diphtheriae (strain ATCC 700971 / NCTC 13129 / Biotype gravis).